Reading from the N-terminus, the 197-residue chain is Casparian strip membrane protein 5 (197 aa).

Residues M1–G34 lie on the Cytoplasmic side of the membrane. Residues V35–A55 form a helical membrane-spanning segment. Over T56 to Q84 the chain is Extracellular. A helical membrane pass occupies residues F85 to I105. Residues V106–R117 are Cytoplasmic-facing. Residues L118 to A138 form a helical membrane-spanning segment. Residues A139–A171 are Extracellular-facing. Residues V172–V192 form a helical membrane-spanning segment. The Cytoplasmic portion of the chain corresponds to L193–H197.

Belongs to the Casparian strip membrane proteins (CASP) family. In terms of assembly, homodimer and heterodimers.

It localises to the cell membrane. Functionally, regulates membrane-cell wall junctions and localized cell wall deposition. Required for establishment of the Casparian strip membrane domain (CSD) and the subsequent formation of Casparian strips, a cell wall modification of the root endodermis that determines an apoplastic barrier between the intraorganismal apoplasm and the extraorganismal apoplasm and prevents lateral diffusion. This Lotus japonicus (Lotus corniculatus var. japonicus) protein is Casparian strip membrane protein 5.